Here is a 298-residue protein sequence, read N- to C-terminus: 4-nitrophenylphosphatase (298 aa).

Homodimer. Post-translationally, the N-terminus is blocked.

The enzyme catalyses 4-nitrophenyl phosphate + H2O = 4-nitrophenol + phosphate + H(+). With respect to regulation, activity enhanced by Mg(2+) ion but inhibited by Zn(2+) ion. The polypeptide is 4-nitrophenylphosphatase (pho2) (Schizosaccharomyces pombe (strain 972 / ATCC 24843) (Fission yeast)).